A 126-amino-acid polypeptide reads, in one-letter code: Anti-adapter protein IraD (126 aa).

The protein belongs to the GpW/Gp25 family. IraD subfamily. In terms of assembly, interacts with RssB.

It is found in the cytoplasm. Its function is as follows. Inhibits RpoS proteolysis by regulating RssB activity, thereby increasing the stability of the sigma stress factor RpoS during oxidative stress. Its effect on RpoS stability is due to its interaction with RssB, which probably blocks the interaction of RssB with RpoS, and the consequent delivery of the RssB-RpoS complex to the ClpXP protein degradation pathway. The sequence is that of Anti-adapter protein IraD from Salmonella arizonae (strain ATCC BAA-731 / CDC346-86 / RSK2980).